The primary structure comprises 116 residues: uncharacterized protein (116 aa).

This is an uncharacterized protein from Bacillus subtilis (strain 168).